A 380-amino-acid polypeptide reads, in one-letter code: MSSSVAVCNSPVFSPSSSLFCNKPLNTSPAHETLTLSLSHLNPPVSSTSPSAASPTSPFCLRLLKPPAKLGFGSDSGPGSILKRKRPTTLDIPVAPVGIAAPISNADTPREESRAVEREGDGYSVYCKRGKREAMEDRFSAITNLQGDPKQAIFGVYDGHGGPTAAEFAAKNLCSNILGEIVGGRNESKIEEAVKRGYLATDSEFLKEKNVKGGSCCVTALISDGNLVVANAGDCRAVLSVGGFAEALTSDHRPSRDDERNRIESSGGYVDTFNSVWRIQGSLAVSRGIGDAHLKQWIISEPEINILRINPQHEFLILASDGLWDKVSNQEAVDIARPFCKGTDQKRKPLLACKKLVDLSVSRGSLDDISVMLIQLCHLF.

The 255-residue stretch at 122-376 folds into the PPM-type phosphatase domain; it reads GYSVYCKRGK…DDISVMLIQL (255 aa). Mn(2+) is bound by residues Asp158, Gly159, Asp321, and Asp367.

This sequence belongs to the PP2C family. Mg(2+) serves as cofactor. Requires Mn(2+) as cofactor.

It catalyses the reaction O-phospho-L-seryl-[protein] + H2O = L-seryl-[protein] + phosphate. The enzyme catalyses O-phospho-L-threonyl-[protein] + H2O = L-threonyl-[protein] + phosphate. The protein is Probable protein phosphatase 2C 2 of Arabidopsis thaliana (Mouse-ear cress).